The sequence spans 337 residues: MTDSPRLYSGMQPSADSLHLGNYVGALLQWKELQAAHDAFFSVVDLHAITVAQDPHDLREKTRRTAAQYIAAGIDPSVSTLYVQSHVPAHAQLAWVLSTITGYGEAARMTQFKDKSAKQGAEATSVGLFTYPVLMAADILLFDADVVPVGDDQRQHVELTRDLAERFNSRFGETFVVPQAMILKDGARIYDLQSPESKMSKSADSGAGIVWLLDEPDIARKKIMRAVTDTDGVVSYDRAGKPGVSNLLSIYSALSGRAIQQIELDYEGKGYGDFKKGLVEVVVDALGPIRERTLELLADPAELDRILAGNAARAGEAAEITLAKAYEAIGFLQPTRR.

ATP is bound by residues 12-14 (QPS) and 21-22 (GN). Residues 13-22 (PSADSLHLGN) carry the 'HIGH' region motif. L-tryptophan is bound at residue Asp-138. Residues 150–152 (GDD), Ile-189, and 198–202 (KMSKS) contribute to the ATP site. The 'KMSKS' region motif lies at 198–202 (KMSKS).

This sequence belongs to the class-I aminoacyl-tRNA synthetase family. As to quaternary structure, homodimer.

The protein resides in the cytoplasm. The catalysed reaction is tRNA(Trp) + L-tryptophan + ATP = L-tryptophyl-tRNA(Trp) + AMP + diphosphate + H(+). Functionally, catalyzes the attachment of tryptophan to tRNA(Trp). The protein is Tryptophan--tRNA ligase of Leifsonia xyli subsp. xyli (strain CTCB07).